Consider the following 454-residue polypeptide: UPF0210 protein Blon_2054/BLIJ_2131 (454 aa).

This sequence belongs to the UPF0210 family. As to quaternary structure, homodimer.

In Bifidobacterium longum subsp. infantis (strain ATCC 15697 / DSM 20088 / JCM 1222 / NCTC 11817 / S12), this protein is UPF0210 protein Blon_2054/BLIJ_2131.